The chain runs to 648 residues: Copper methylamine oxidase (648 aa).

The propeptide occupies 1 to 9 (MTLNAESEA). 299-310 (AFDSGEYNIGNM) provides a ligand contact to substrate. The active-site Proton acceptor is the Asp301. A disulfide bond links Cys320 and Cys346. A substrate-binding site is contributed by 382-387 (VANYEY). Catalysis depends on Tyr385, which acts as the Schiff-base intermediate with substrate; via topaquinone. Tyr385 bears the 2',4',5'-topaquinone mark. Residues His436 and His438 each contribute to the Cu cation site. Mn(2+) contacts are provided by Asp445, Phe446, and Asp584. His595 is a Cu cation binding site. The segment at 629–648 (PTSTSTTQTGEADTCCHTDK) is disordered.

It belongs to the copper/topaquinone oxidase family. In terms of assembly, homodimer. The cofactor is Cu cation. Zn(2+) serves as cofactor. Requires L-topaquinone as cofactor. It depends on Mn(2+) as a cofactor. Post-translationally, topaquinone (TPQ) is generated by copper-dependent autoxidation of a specific tyrosyl residue.

The enzyme catalyses a primary methyl amine + O2 + H2O = an aldehyde + H2O2 + NH4(+). The protein is Copper methylamine oxidase (maoII) of Arthrobacter sp. (strain P1).